Here is an 824-residue protein sequence, read N- to C-terminus: Disintegrin and metalloproteinase domain-containing protein 17 (824 aa).

An N-terminal signal peptide occupies residues 1-17 (MRQSLLFLTSVVPFVLA). Positions 18 to 214 (PRPPDDPGFG…PEELVHRVKR (197 aa)) are excised as a propeptide. N-linked (GlcNAc...) asparagine glycosylation is found at asparagine 103, asparagine 157, and asparagine 174. Positions 182–189 (KVCGYLKV) match the Cysteine switch motif. Cysteine 184 lines the Zn(2+) pocket. The Extracellular portion of the chain corresponds to 215–671 (RADPDPMKNT…NTFGKFLADN (457 aa)). The Peptidase M12B domain maps to 223–474 (NTCKLLVVAD…KAQECFQERS (252 aa)). Intrachain disulfides connect cysteine 225–cysteine 333, cysteine 365–cysteine 469, and cysteine 423–cysteine 453. A glycan (N-linked (GlcNAc...) asparagine) is linked at asparagine 264. Zn(2+) is bound at residue histidine 405. Glutamate 406 is a catalytic residue. Zn(2+) is bound by residues histidine 409 and histidine 415. 4 N-linked (GlcNAc...) asparagine glycosylation sites follow: asparagine 452, asparagine 498, asparagine 539, and asparagine 551. A Disintegrin domain is found at 475–563 (NKVCGNSRVD…ECPPPGNAED (89 aa)). 4 disulfide bridges follow: cysteine 534-cysteine 555, cysteine 573-cysteine 582, cysteine 578-cysteine 591, and cysteine 593-cysteine 600. A glycan (N-linked (GlcNAc...) asparagine) is linked at asparagine 594. The segment at 603–671 (CCRDLSGRCV…NTFGKFLADN (69 aa)) is crambin-like. The chain crosses the membrane as a helical span at residues 672-692 (IVGSVLVFSLIFWIPFSILVH). The Cytoplasmic segment spans residues 693–824 (CVDKKLDKQY…NRVDSKETEC (132 aa)). 2 consecutive short sequence motifs (SH3-binding) follow at residues 731–738 (PAPQTPGR) and 741–748 (PAPVIPSA). The disordered stretch occupies residues 732–824 (APQTPGRLQP…NRVDSKETEC (93 aa)). Threonine 735 is subject to Phosphothreonine; by MAPK14. The span at 741–752 (PAPVIPSAPAAP) shows a compositional bias: low complexity. Residue threonine 761 is modified to Phosphothreonine. Serine 767 is subject to Phosphoserine. Composition is skewed to basic and acidic residues over residues 768–781 (TDSHMDEDGFEKDP), 791–807 (SFEDLTDHPVTRSEKAA), and 815–824 (NRVDSKETEC). Residues serine 791 and serine 819 each carry the phosphoserine modification.

Interacts with MAD2L1, MAPK14 and MUC1. Interacts with iRhom1/RHBDF1 and iRhom2/RHBDF2. Interacts with FRMD8 via its interaction with iRhom1/RHBDF1 and iRhom2/RHBDF2. Interacts with TSPAN8. Zn(2+) serves as cofactor. The precursor is cleaved by a furin endopeptidase. In terms of processing, phosphorylated. Stimulation by growth factor or phorbol 12-myristate 13-acetate induces phosphorylation of Ser-819 but decreases phosphorylation of Ser-791. Phosphorylation at Thr-735 by MAPK14 is required for ADAM17-mediated ectodomain shedding. As to expression, ubiquitously expressed. Expressed at highest levels in adult heart, placenta, skeletal muscle, pancreas, spleen, thymus, prostate, testes, ovary and small intestine, and in fetal brain, lung, liver and kidney. Expressed in natural killer cells (at protein level).

It localises to the cell membrane. The catalysed reaction is Narrow endopeptidase specificity. Cleaves Pro-Leu-Ala-Gln-Ala-|-Val-Arg-Ser-Ser-Ser in the membrane-bound, 26-kDa form of tumor necrosis factor alpha (TNFalpha). Similarly cleaves other membrane-anchored, cell-surface proteins to 'shed' the extracellular domains.. Functionally, transmembrane metalloprotease which mediates the ectodomain shedding of a myriad of transmembrane proteins including adhesion proteins, growth factor precursors and cytokines important for inflammation and immunity. Cleaves the membrane-bound precursor of TNF-alpha to its mature soluble form. Responsible for the proteolytical release of soluble JAM3 from endothelial cells surface. Responsible for the proteolytic release of several other cell-surface proteins, including p75 TNF-receptor, interleukin 1 receptor type II, p55 TNF-receptor, transforming growth factor-alpha, L-selectin, growth hormone receptor, MUC1 and the amyloid precursor protein. Acts as an activator of Notch pathway by mediating cleavage of Notch, generating the membrane-associated intermediate fragment called Notch extracellular truncation (NEXT). Plays a role in the proteolytic processing of ACE2. Plays a role in hemostasis through shedding of GP1BA, the platelet glycoprotein Ib alpha chain. Mediates the proteolytic cleavage of LAG3, leading to release the secreted form of LAG3. Mediates the proteolytic cleavage of IL6R, leading to the release of secreted form of IL6R. Mediates the proteolytic cleavage and shedding of FCGR3A upon NK cell stimulation, a mechanism that allows for increased NK cell motility and detachment from opsonized target cells. Cleaves TREM2, resulting in shedding of the TREM2 ectodomain. This is Disintegrin and metalloproteinase domain-containing protein 17 from Homo sapiens (Human).